Here is a 91-residue protein sequence, read N- to C-terminus: Small ribosomal subunit protein bS18 (91 aa).

Belongs to the bacterial ribosomal protein bS18 family. Part of the 30S ribosomal subunit. Forms a tight heterodimer with protein bS6.

In terms of biological role, binds as a heterodimer with protein bS6 to the central domain of the 16S rRNA, where it helps stabilize the platform of the 30S subunit. The chain is Small ribosomal subunit protein bS18 from Paraburkholderia phytofirmans (strain DSM 17436 / LMG 22146 / PsJN) (Burkholderia phytofirmans).